We begin with the raw amino-acid sequence, 207 residues long: Ribosomal RNA small subunit methyltransferase G (207 aa).

S-adenosyl-L-methionine is bound by residues G73, L78, 124-125 (VE), and R139.

This sequence belongs to the methyltransferase superfamily. RNA methyltransferase RsmG family.

It is found in the cytoplasm. The catalysed reaction is guanosine(527) in 16S rRNA + S-adenosyl-L-methionine = N(7)-methylguanosine(527) in 16S rRNA + S-adenosyl-L-homocysteine. Functionally, specifically methylates the N7 position of guanine in position 527 of 16S rRNA. This Klebsiella pneumoniae subsp. pneumoniae (strain ATCC 700721 / MGH 78578) protein is Ribosomal RNA small subunit methyltransferase G.